A 180-amino-acid chain; its full sequence is Crossover junction endodeoxyribonuclease RuvC (180 aa).

Catalysis depends on residues Asp-7, Glu-66, and Asp-138. Mg(2+) contacts are provided by Asp-7, Glu-66, and Asp-138.

This sequence belongs to the RuvC family. Homodimer which binds Holliday junction (HJ) DNA. The HJ becomes 2-fold symmetrical on binding to RuvC with unstacked arms; it has a different conformation from HJ DNA in complex with RuvA. In the full resolvosome a probable DNA-RuvA(4)-RuvB(12)-RuvC(2) complex forms which resolves the HJ. It depends on Mg(2+) as a cofactor.

Its subcellular location is the cytoplasm. It catalyses the reaction Endonucleolytic cleavage at a junction such as a reciprocal single-stranded crossover between two homologous DNA duplexes (Holliday junction).. The RuvA-RuvB-RuvC complex processes Holliday junction (HJ) DNA during genetic recombination and DNA repair. Endonuclease that resolves HJ intermediates. Cleaves cruciform DNA by making single-stranded nicks across the HJ at symmetrical positions within the homologous arms, yielding a 5'-phosphate and a 3'-hydroxyl group; requires a central core of homology in the junction. The consensus cleavage sequence is 5'-(A/T)TT(C/G)-3'. Cleavage occurs on the 3'-side of the TT dinucleotide at the point of strand exchange. HJ branch migration catalyzed by RuvA-RuvB allows RuvC to scan DNA until it finds its consensus sequence, where it cleaves and resolves the cruciform DNA. This Paraburkholderia phymatum (strain DSM 17167 / CIP 108236 / LMG 21445 / STM815) (Burkholderia phymatum) protein is Crossover junction endodeoxyribonuclease RuvC.